Consider the following 87-residue polypeptide: DNA-directed RNA polymerase subunit omega (87 aa).

This sequence belongs to the RNA polymerase subunit omega family. In terms of assembly, the RNAP catalytic core consists of 2 alpha, 1 beta, 1 beta' and 1 omega subunit. When a sigma factor is associated with the core the holoenzyme is formed, which can initiate transcription.

The enzyme catalyses RNA(n) + a ribonucleoside 5'-triphosphate = RNA(n+1) + diphosphate. Its function is as follows. Promotes RNA polymerase assembly. Latches the N- and C-terminal regions of the beta' subunit thereby facilitating its interaction with the beta and alpha subunits. The polypeptide is DNA-directed RNA polymerase subunit omega (Pseudomonas putida (strain W619)).